A 398-amino-acid polypeptide reads, in one-letter code: Nocardicin C N-oxygenase (398 aa).

A disordered region spans residues 63–90 (RARAAGREETPRVTPEAAPAGSMLSMDP). Histidine 93, arginine 97, arginine 289, histidine 345, and cysteine 347 together coordinate heme.

Belongs to the cytochrome P450 family. The cofactor is heme.

The enzyme catalyses nocardicin C + 4 reduced [2Fe-2S]-[ferredoxin] + 2 O2 + 2 H(+) = nocardicin A + 4 oxidized [2Fe-2S]-[ferredoxin] + 3 H2O. It participates in antibiotic biosynthesis. Functionally, involved in the biosynthesis of the beta-lactam antibiotic nocardicin A. Catalyzes the conversion of nocardicin C to nocardicin A. Cannot use nocardicin G. The sequence is that of Nocardicin C N-oxygenase from Nocardia uniformis subsp. tsuyamanensis.